We begin with the raw amino-acid sequence, 545 residues long: Chaperonin GroEL (545 aa).

Residues 29-32 (TMGP), lysine 50, 86-90 (DGTTT), glycine 414, 477-479 (DAA), and aspartate 493 each bind ATP.

This sequence belongs to the chaperonin (HSP60) family. Forms a cylinder of 14 subunits composed of two heptameric rings stacked back-to-back. Interacts with the co-chaperonin GroES.

Its subcellular location is the cytoplasm. The catalysed reaction is ATP + H2O + a folded polypeptide = ADP + phosphate + an unfolded polypeptide.. Together with its co-chaperonin GroES, plays an essential role in assisting protein folding. The GroEL-GroES system forms a nano-cage that allows encapsulation of the non-native substrate proteins and provides a physical environment optimized to promote and accelerate protein folding. The chain is Chaperonin GroEL from Campylobacter lari (strain RM2100 / D67 / ATCC BAA-1060).